A 284-amino-acid polypeptide reads, in one-letter code: D-tagatose-1,6-bisphosphate aldolase subunit GatY (284 aa).

The active-site Proton donor is D82. H83 and H180 together coordinate Zn(2+). G181 contributes to the dihydroxyacetone phosphate binding site. Residue H208 participates in Zn(2+) binding. Dihydroxyacetone phosphate contacts are provided by residues 209-211 (GAS) and 230-233 (NVAT).

This sequence belongs to the class II fructose-bisphosphate aldolase family. TagBP aldolase GatY subfamily. In terms of assembly, forms a complex with GatZ. Requires Zn(2+) as cofactor.

It carries out the reaction D-tagatofuranose 1,6-bisphosphate = D-glyceraldehyde 3-phosphate + dihydroxyacetone phosphate. It functions in the pathway carbohydrate metabolism; D-tagatose 6-phosphate degradation; D-glyceraldehyde 3-phosphate and glycerone phosphate from D-tagatose 6-phosphate: step 2/2. Functionally, catalytic subunit of the tagatose-1,6-bisphosphate aldolase GatYZ, which catalyzes the reversible aldol condensation of dihydroxyacetone phosphate (DHAP or glycerone-phosphate) with glyceraldehyde 3-phosphate (G3P) to produce tagatose 1,6-bisphosphate (TBP). Requires GatZ subunit for full activity and stability. Is involved in the catabolism of galactitol. This Escherichia coli O157:H7 protein is D-tagatose-1,6-bisphosphate aldolase subunit GatY.